The sequence spans 805 residues: Probable phosphoketolase (805 aa).

This sequence belongs to the XFP family. Thiamine diphosphate is required as a cofactor.

In Synechocystis sp. (strain ATCC 27184 / PCC 6803 / Kazusa), this protein is Probable phosphoketolase.